We begin with the raw amino-acid sequence, 468 residues long: Probable Xaa-Pro aminopeptidase PEPP (468 aa).

Asp264, Asp275, Glu398, and Glu438 together coordinate Mn(2+).

Belongs to the peptidase M24B family. It depends on Mn(2+) as a cofactor.

The enzyme catalyses Release of any N-terminal amino acid, including proline, that is linked to proline, even from a dipeptide or tripeptide.. In terms of biological role, catalyzes the removal of a penultimate prolyl residue from the N-termini of peptides. This is Probable Xaa-Pro aminopeptidase PEPP (PEPP) from Paracoccidioides lutzii (strain ATCC MYA-826 / Pb01) (Paracoccidioides brasiliensis).